The following is a 639-amino-acid chain: Protein artemis (639 aa).

Disordered stretches follow at residues 450–496 (MDCT…LTSS), 515–570 (SELE…SQVD), and 590–617 (EAAELKSDSQVSSDFELPPTPGSKVPQP). Residues 454 to 466 (ESNDDDDDEDDAA) show a composition bias toward acidic residues. Positions 518-537 (ENSQNTQTLSTENTASQSPE) are enriched in polar residues. Residues 548 to 560 (VHMSSSQSTHISD) show a composition bias toward low complexity.

Belongs to the DNA repair metallo-beta-lactamase (DRMBL) family.

It localises to the nucleus. May have a role in the processing of DNA double strand breaks (DSBs) prior to their repair by the non homologous end joining (NHEJ) pathway. Probably exhibits both exonuclease and endonuclease activity. This Danio rerio (Zebrafish) protein is Protein artemis (dclre1c).